The sequence spans 956 residues: Golgin candidate 5 (956 aa).

Disordered regions lie at residues 70 to 230 and 278 to 298; these read MSFM…QHKI and IFESDGSPYESSIPKRSSSDE. Composition is skewed to basic and acidic residues over residues 77 to 89 and 118 to 129; these read SDEKPDTLEDSVR and ANKETNVRREAD. 2 stretches are compositionally biased toward polar residues: residues 160 to 177 and 184 to 193; these read EYSLQTPESSGYKTSLQP and TASQDSQPEQ. Residues 206-219 show a composition bias toward basic and acidic residues; the sequence is SEAKEVTVENKDTV. Residues 333–765 are a coiled coil; it reads SDSADVILEL…LIQKDLEREK (433 aa). Residue Ser793 is modified to Phosphoserine. A coiled-coil region spans residues 851-951; sequence SAYEATLRQK…EMYREQVNML (101 aa).

In terms of assembly, interacts with RABH1B and RABH1C, but not with RABD1 or RABD2A.

The protein resides in the golgi apparatus. It localises to the cytoplasm. Its function is as follows. Golgi matrix protein playing a role in tethering of vesicles to Golgi membranes and in maintaining the overall structure of the Golgi apparatus. In Arabidopsis thaliana (Mouse-ear cress), this protein is Golgin candidate 5 (GC5).